The following is a 786-amino-acid chain: Tyrosine-protein kinase Btk (786 aa).

The tract at residues 1-23 (MMGTKHRNSHVNGSIKSSSSLRS) is disordered. Positions 14–23 (SIKSSSSLRS) are enriched in low complexity. The 144-residue stretch at 41–184 (DVVKSGSMVK…WIRAIRQVCE (144 aa)) folds into the PH domain. A Btk-type zinc finger spans residues 187-223 (NTPKSYRYHPGLWSGKKWSCCKGLSRTTFGCRAAAHW). Residues histidine 195, cysteine 206, cysteine 207, and cysteine 217 each coordinate Zn(2+). Residues 226–240 (ANNNPSNGSSPAQNS) are compositionally biased toward low complexity. A disordered region spans residues 226–301 (ANNNPSNGSS…TPTSLQPQSS (76 aa)). The span at 241-260 (TRSISPNSSTTNSQFSLQHN) shows a compositional bias: polar residues. Residues 264–290 (SLGGGVGGGLGGGGSLGLGGGGGGGGS) show a composition bias toward gly residues. Over residues 291-301 (CTPTSLQPQSS) the composition is skewed to polar residues. Residues 342–402 (HFVKLVVALY…PSNYVKPKAL (61 aa)) form the SH3 domain. Residues 410–503 (WYVGDMSRQR…GLACRLKSSP (94 aa)) form the SH2 domain. The Protein kinase domain maps to 526–779 (LMLMEELGSG…FRVLMDQLAL (254 aa)). ATP contacts are provided by residues 532-540 (LGSGQFGVV) and lysine 554. Aspartate 647 functions as the Proton acceptor in the catalytic mechanism. Tyrosine 677 is subject to Phosphotyrosine; by autocatalysis.

It belongs to the protein kinase superfamily. Tyr protein kinase family. TEC subfamily. Zn(2+) is required as a cofactor. As to expression, ring canals in the egg chambers and imaginal disks of third-instar larvae.

The catalysed reaction is L-tyrosyl-[protein] + ATP = O-phospho-L-tyrosyl-[protein] + ADP + H(+). Functionally, required for proper ring canal development. Also required for the development of male genitalia and for adult survival. The protein is Tyrosine-protein kinase Btk of Drosophila melanogaster (Fruit fly).